The following is a 442-amino-acid chain: Histidinol dehydrogenase (442 aa).

NAD(+)-binding residues include Tyr136, Gln197, and Asn220. Residues Ser243, Gln265, and His268 each coordinate substrate. Zn(2+)-binding residues include Gln265 and His268. Catalysis depends on proton acceptor residues Glu333 and His334. Substrate-binding residues include His334, Asp367, Glu421, and His426. Asp367 lines the Zn(2+) pocket. Residue His426 coordinates Zn(2+).

This sequence belongs to the histidinol dehydrogenase family. The cofactor is Zn(2+).

It carries out the reaction L-histidinol + 2 NAD(+) + H2O = L-histidine + 2 NADH + 3 H(+). It functions in the pathway amino-acid biosynthesis; L-histidine biosynthesis; L-histidine from 5-phospho-alpha-D-ribose 1-diphosphate: step 9/9. Functionally, catalyzes the sequential NAD-dependent oxidations of L-histidinol to L-histidinaldehyde and then to L-histidine. In Pseudomonas fluorescens (strain ATCC BAA-477 / NRRL B-23932 / Pf-5), this protein is Histidinol dehydrogenase.